The sequence spans 239 residues: MQTRITWHGHSNFQVASGGTNVLIDPFFDGNPVAATRWDAIDRPDLVLVTHDHGDHVGQAIDICKATGAKLGCVVGTDARLVEAGLPRELVLNGIGFNIGGTVECAGVRITMTQAYHSSESGVPVGYIVTMPDGFTFYHAGDTGIFSEMELWGRLYAIDLALLPIGGVFTMDPRQAALACSLLRARSVIPMHWGTFPVLEQNTTRFREQLANHAPDCRLFNMTPGESLTLDRSQEGCAC.

Belongs to the UPF0173 family.

In Nitratidesulfovibrio vulgaris (strain DP4) (Desulfovibrio vulgaris), this protein is UPF0173 metal-dependent hydrolase Dvul_0081.